The chain runs to 283 residues: Bifunctional protein FolD (283 aa).

Residues 165–167 (GRS), Ser190, and Ile231 each bind NADP(+).

It belongs to the tetrahydrofolate dehydrogenase/cyclohydrolase family. Homodimer.

It carries out the reaction (6R)-5,10-methylene-5,6,7,8-tetrahydrofolate + NADP(+) = (6R)-5,10-methenyltetrahydrofolate + NADPH. It catalyses the reaction (6R)-5,10-methenyltetrahydrofolate + H2O = (6R)-10-formyltetrahydrofolate + H(+). Its pathway is one-carbon metabolism; tetrahydrofolate interconversion. In terms of biological role, catalyzes the oxidation of 5,10-methylenetetrahydrofolate to 5,10-methenyltetrahydrofolate and then the hydrolysis of 5,10-methenyltetrahydrofolate to 10-formyltetrahydrofolate. This chain is Bifunctional protein FolD, found in Herminiimonas arsenicoxydans.